Reading from the N-terminus, the 75-residue chain is UPF0150 protein TM_1313 (75 aa).

The protein belongs to the UPF0150 family.

In Thermotoga maritima (strain ATCC 43589 / DSM 3109 / JCM 10099 / NBRC 100826 / MSB8), this protein is UPF0150 protein TM_1313.